Consider the following 152-residue polypeptide: Protein SprT-like (152 aa).

In terms of domain architecture, SprT-like spans 9-149 (LQKLTETISL…CGKCNGKLKE (141 aa)). H70 provides a ligand contact to Zn(2+). The active site involves E71. H74 contacts Zn(2+).

It belongs to the SprT family. It depends on Zn(2+) as a cofactor.

It is found in the cytoplasm. In Staphylococcus saprophyticus subsp. saprophyticus (strain ATCC 15305 / DSM 20229 / NCIMB 8711 / NCTC 7292 / S-41), this protein is Protein SprT-like.